We begin with the raw amino-acid sequence, 463 residues long: Kynureninase 2 (463 aa).

Pyridoxal 5'-phosphate is bound by residues Leu134, Thr135, Phe162–Asp165, Asp247, His250, and Tyr272. Lys273 bears the N6-(pyridoxal phosphate)lysine mark. Pyridoxal 5'-phosphate contacts are provided by Trp312 and Asn340.

This sequence belongs to the kynureninase family. Homodimer. Pyridoxal 5'-phosphate is required as a cofactor.

It is found in the cytoplasm. It carries out the reaction L-kynurenine + H2O = anthranilate + L-alanine + H(+). The enzyme catalyses 3-hydroxy-L-kynurenine + H2O = 3-hydroxyanthranilate + L-alanine + H(+). It functions in the pathway amino-acid degradation; L-kynurenine degradation; L-alanine and anthranilate from L-kynurenine: step 1/1. It participates in cofactor biosynthesis; NAD(+) biosynthesis; quinolinate from L-kynurenine: step 2/3. In terms of biological role, catalyzes the cleavage of L-kynurenine (L-Kyn) and L-3-hydroxykynurenine (L-3OHKyn) into anthranilic acid (AA) and 3-hydroxyanthranilic acid (3-OHAA), respectively. This is Kynureninase 2 (bna5-2) from Aspergillus terreus (strain NIH 2624 / FGSC A1156).